Reading from the N-terminus, the 176-residue chain is Transcription factor E (176 aa).

In terms of domain architecture, HTH TFE/IIEalpha-type spans 5-89 (IDQLMKDMAR…YWKANVDQIN (85 aa)).

This sequence belongs to the TFE family. Monomer. Interaction with RNA polymerase subunits RpoF and RpoE is necessary for Tfe stimulatory transcription activity. Able to interact with Tbp and RNA polymerase in the absence of DNA promoter. Interacts both with the preinitiation and elongation complexes.

Its function is as follows. Transcription factor that plays a role in the activation of archaeal genes transcribed by RNA polymerase. Facilitates transcription initiation by enhancing TATA-box recognition by TATA-box-binding protein (Tbp), and transcription factor B (Tfb) and RNA polymerase recruitment. Not absolutely required for transcription in vitro, but particularly important in cases where Tbp or Tfb function is not optimal. It dynamically alters the nucleic acid-binding properties of RNA polymerases by stabilizing the initiation complex and destabilizing elongation complexes. Seems to translocate with the RNA polymerase following initiation and acts by binding to the non template strand of the transcription bubble in elongation complexes. The protein is Transcription factor E of Metallosphaera sedula (strain ATCC 51363 / DSM 5348 / JCM 9185 / NBRC 15509 / TH2).